We begin with the raw amino-acid sequence, 293 residues long: Ribosomal protein L11 methyltransferase (293 aa).

The S-adenosyl-L-methionine site is built by Thr145, Gly166, Asp188, and Asn230.

It belongs to the methyltransferase superfamily. PrmA family.

Its subcellular location is the cytoplasm. It catalyses the reaction L-lysyl-[protein] + 3 S-adenosyl-L-methionine = N(6),N(6),N(6)-trimethyl-L-lysyl-[protein] + 3 S-adenosyl-L-homocysteine + 3 H(+). Functionally, methylates ribosomal protein L11. This is Ribosomal protein L11 methyltransferase from Shigella sonnei (strain Ss046).